The primary structure comprises 709 residues: Molybdenum cofactor sulfurase (709 aa).

Lys208 is modified (N6-(pyridoxal phosphate)lysine). Cys367 is an active-site residue. Positions 563–707 constitute an MOSC domain; sequence DNALDRQNCR…LESGMSVNFS (145 aa).

Belongs to the class-V pyridoxal-phosphate-dependent aminotransferase family. MOCOS subfamily. The cofactor is pyridoxal 5'-phosphate.

The enzyme catalyses Mo-molybdopterin + L-cysteine + AH2 = thio-Mo-molybdopterin + L-alanine + A + H2O. Its pathway is cofactor biosynthesis; molybdopterin biosynthesis. Functionally, sulfurates the molybdenum cofactor. Sulfation of molybdenum is essential for xanthine dehydrogenase (XDH) and aldehyde oxidase (ADO) enzymes in which molybdenum cofactor is liganded by 1 oxygen and 1 sulfur atom in active form. This is Molybdenum cofactor sulfurase from Caenorhabditis elegans.